A 332-amino-acid chain; its full sequence is NADH-quinone oxidoreductase subunit H (332 aa).

The next 9 membrane-spanning stretches (helical) occupy residues 4–24 (FAFFALETLIKCIIIIAIFAS), 44–64 (IGPDMVGPFGLIQLVADMIKL), 78–98 (FIFAIAPLISAICAFVSLAAI), 120–140 (VALLFVIGTSGLCFYAVFLGG), 165–185 (VGALALIAIIMLVGSFSLVDI), 194–214 (FSWLIFKQPLAFVLFIIALFI), 255–275 (IAGAILVTLLFLGGFNSFWII), 279–299 (IMMIVKSSFIFFWYFWARAAF), and 312–332 (YLILIPLAVLNLLITALTVLL).

The protein belongs to the complex I subunit 1 family. NDH-1 is composed of 14 different subunits. Subunits NuoA, H, J, K, L, M, N constitute the membrane sector of the complex.

It localises to the cell inner membrane. It catalyses the reaction a quinone + NADH + 5 H(+)(in) = a quinol + NAD(+) + 4 H(+)(out). Functionally, NDH-1 shuttles electrons from NADH, via FMN and iron-sulfur (Fe-S) centers, to quinones in the respiratory chain. The immediate electron acceptor for the enzyme in this species is believed to be ubiquinone. Couples the redox reaction to proton translocation (for every two electrons transferred, four hydrogen ions are translocated across the cytoplasmic membrane), and thus conserves the redox energy in a proton gradient. This subunit may bind ubiquinone. The sequence is that of NADH-quinone oxidoreductase subunit H from Campylobacter jejuni subsp. jejuni serotype O:23/36 (strain 81-176).